Consider the following 383-residue polypeptide: Dihydroorotase (383 aa).

The Zn(2+) site is built by H47 and H49. Substrate is bound by residues 49-51 (HFR) and N81. Residues K128, H159, H198, and D264 each coordinate Zn(2+). K128 bears the N6-carboxylysine mark. D264 is an active-site residue. Substrate contacts are provided by residues H268 and 280–281 (PG).

The protein belongs to the metallo-dependent hydrolases superfamily. DHOase family. Class I DHOase subfamily. It depends on Zn(2+) as a cofactor.

The catalysed reaction is (S)-dihydroorotate + H2O = N-carbamoyl-L-aspartate + H(+). It participates in pyrimidine metabolism; UMP biosynthesis via de novo pathway; (S)-dihydroorotate from bicarbonate: step 3/3. Its function is as follows. Catalyzes the reversible cyclization of carbamoyl aspartate to dihydroorotate. This chain is Dihydroorotase, found in Pyrobaculum aerophilum (strain ATCC 51768 / DSM 7523 / JCM 9630 / CIP 104966 / NBRC 100827 / IM2).